The following is a 208-amino-acid chain: MKVKICGITHPDDAREAAKAGADYIGMIFAKDSRRCVSEEKAKYIVEAIQEGNSEPVGVFPEHSVEEILAITETTGITSIQLSGEDILFKFSHLREHFSIFYVVSVYSNGQPSAALPPMNDAVTVVYDHIGGERGSPFDWKAFSPFQHNNWMLGGGVNLWNIKEGISLLNPRGIDVSSGVECPGILRKDIFLMQALINSAKELSSSTL.

This sequence belongs to the TrpF family.

It catalyses the reaction N-(5-phospho-beta-D-ribosyl)anthranilate = 1-(2-carboxyphenylamino)-1-deoxy-D-ribulose 5-phosphate. It functions in the pathway amino-acid biosynthesis; L-tryptophan biosynthesis; L-tryptophan from chorismate: step 3/5. The chain is N-(5'-phosphoribosyl)anthranilate isomerase from Chlamydia trachomatis serovar A (strain ATCC VR-571B / DSM 19440 / HAR-13).